The primary structure comprises 514 residues: 1-pyrroline-5-carboxylate dehydrogenase (514 aa).

Residues Glu286 and Cys320 contribute to the active site.

Belongs to the aldehyde dehydrogenase family. RocA subfamily.

The enzyme catalyses L-glutamate 5-semialdehyde + NAD(+) + H2O = L-glutamate + NADH + 2 H(+). It functions in the pathway amino-acid degradation; L-proline degradation into L-glutamate; L-glutamate from L-proline: step 2/2. The sequence is that of 1-pyrroline-5-carboxylate dehydrogenase from Staphylococcus aureus (strain MRSA252).